The primary structure comprises 448 residues: Gluconate permease (448 aa).

12 consecutive transmembrane segments (helical) span residues 2-22, 23-43, 52-72, 106-126, 134-154, 174-194, 228-248, 269-289, 302-322, 347-367, 373-393, and 428-448; these read PLII…GLKL, NTFI…GMPF, AGIG…AMLG, FIIG…PIVF, ISIL…HGFL, VLLY…PLFT, FGIS…ATII, IGNA…TMGI, CSTA…GGAF, IILA…ATVA, GLVI…VLAT, and LLET…SLVV.

Belongs to the GntP permease family.

The protein resides in the cell membrane. The protein operates within carbohydrate acid metabolism; D-gluconate degradation. In Bacillus subtilis (strain 168), this protein is Gluconate permease (gntP).